Here is a 243-residue protein sequence, read N- to C-terminus: Venom nerve growth factor 3 (243 aa).

An N-terminal signal peptide occupies residues 1–18 (MSMLCYTLIIAFLIGIWA). The propeptide occupies 19–125 (APKSEDNVPL…ALNRNIRAKR (107 aa)). Over residues 47–66 (GLKTSRNTDQRHPAPKKAED) the composition is skewed to basic and acidic residues. Residues 47-67 (GLKTSRNTDQRHPAPKKAEDQ) are disordered. 3 disulfides stabilise this stretch: cysteine 139/cysteine 204, cysteine 182/cysteine 232, and cysteine 192/cysteine 234. Residues asparagine 148 and asparagine 151 are each glycosylated (N-linked (GlcNAc...) asparagine).

Belongs to the NGF-beta family. Homodimer; non-covalently linked. Expressed by the venom gland.

Its subcellular location is the secreted. Its function is as follows. Nerve growth factor is important for the development and maintenance of the sympathetic and sensory nervous systems. It stimulates division and differentiation of sympathetic and embryonic sensory neurons as well as basal forebrain cholinergic neurons in the brain. Its relevance in the snake venom is not clear. However, it has been shown to inhibit metalloproteinase-dependent proteolysis of platelet glycoprotein Ib alpha, suggesting a metalloproteinase inhibition to prevent metalloprotease autodigestion and/or protection against prey proteases. Binds a lipid between the two protein chains in the homodimer. The lipid-bound form promotes histamine relase from mouse mast cells, contrary to the lipid-free form. The sequence is that of Venom nerve growth factor 3 from Tropidechis carinatus (Australian rough-scaled snake).